The chain runs to 418 residues: MKIAIEGCMHGDLDNVYKTIQHYEQIHNTKVDLLLCCGDFQAVRNEKDMDSLNVPRKYREMKSFWKYYSGQEVAPIPTIFIGGNHEASNYLWELYYGGWAATNIYFLGFAGVVKFGNVRIGGLSGIYNERHYRSGHFERPPYNESTIRSVYHVRDYDVQKLMQLEEPLDIFLSHDWPVGITDYGDSESLMRQKPYFRQEIEEKTLGSKPAALLLEKLKPQYWFSAHLHCKFAAAVQHGNDGSVTKFLALDKCLPGKKFLQIIEIESEPGPFEVLYDEEWLAITRKFNSIFPLTRRYTNVSTAGTIQESREWVRKKLEERQFKPFEFARTVPAYNPSQRVFDSIPEIPQNPQTLSLLELLGLPYLLDSSPVTGERTDIPASLAPSDLPTYDSEEIPIDDIDEIEEMEEAKADDHTRDDA.

A divalent metal cation contacts are provided by Cys-8, His-10, Asp-39, and Asn-84. The tract at residues 124–154 is lariat recognition loop; that stretch reads SGIYNERHYRSGHFERPPYNESTIRSVYHVR. Residues His-174, His-226, and His-228 each coordinate a divalent metal cation. The interval 372–418 is disordered; the sequence is GERTDIPASLAPSDLPTYDSEEIPIDDIDEIEEMEEAKADDHTRDDA. Residues 390–406 are compositionally biased toward acidic residues; it reads DSEEIPIDDIDEIEEME. A compositionally biased stretch (basic and acidic residues) spans 407–418; it reads EAKADDHTRDDA.

This sequence belongs to the lariat debranching enzyme family. Requires Fe(2+) as cofactor. The cofactor is Zn(2+). Mn(2+) is required as a cofactor. As to expression, widely expressed. Expressed in roots, stems, cauline and rosette leaves, flower buds and siliques.

It is found in the nucleus. Its activity is regulated as follows. Active in presence of diverse metals including Fe(2+), Zn(2+), Mn(2+). Binds two metal cations in two adjacent alpha and beta metal-binding pockets. In terms of biological role, cleaves the 2'-5' phosphodiester linkage at the branch point of lariat intron pre-mRNAs after splicing and converts them into linear molecules that are subsequently degraded. It thereby facilitates ribonucleotide turnover. It may also participate in retrovirus replication via an RNA lariat intermediate in cDNA synthesis. Plays en essential role during embryogenesis. The sequence is that of Lariat debranching enzyme (DBR1) from Arabidopsis thaliana (Mouse-ear cress).